Consider the following 529-residue polypeptide: MSLIVSPFAVIAASAAAVAGVLFLIYAALKSGHRDASLPPGPPTVPLFGNELQIPKADAHFQFMKWADEYGGTFSLKRFKNTTIVISDRKLIKELVDKKSNVYSHRPASLVSHLITHSDHLLVMQYGDTWRMLRKTVHQYFMEPNCEKEHWKVQEAEAKQMLYDFLTAPQDHMLHPKRYSNSITNSLVFGIRSKTVHDEYMERLFYLMEKWSLVQELGATPPVDDFWLLRVLPQWMTGHWRHRALEVENLMQSLYTTVLDQVRDRRARGINRDSFMDRVLDRLDKVPLTESQLRFLGGVLMEGGSDTSSSLILTIIQAMTKFPAVQARAHAEIDRVVGADRSPAWSDAAQLPYINCIIKEAHRWRPVSPLGVPHAVAQDDEINGMVLPKGATVVLNVWAMHHDPRRWPEPERFEPARFEEFPALAPTYAASGEWDKRDHYGYGAGRRICPGIHLAERNLIIGVAKLLWAFEFTQPVGSYSDIDPESGASQGFLHCPKEYGCGVRLRAPEKRDTIVREFQEAQEVFARFD.

A helical membrane pass occupies residues 8-28 (FAVIAASAAAVAGVLFLIYAA). Asparagine 81 is a glycosylation site (N-linked (GlcNAc...) asparagine). Heme is bound at residue cysteine 449.

Belongs to the cytochrome P450 family. Heme serves as cofactor.

The protein localises to the endoplasmic reticulum membrane. The catalysed reaction is 3-hydroxybenzyl alcohol + reduced [NADPH--hemoprotein reductase] + O2 = gentisyl alcohol + oxidized [NADPH--hemoprotein reductase] + H2O + H(+). It participates in secondary metabolite biosynthesis. In terms of biological role, cytochrome P450 monooxygenase; part of the gene cluster that mediates the biosynthesis of aculins. The pathway begins with the synthesis of 6-methylsalicylic acid by the polyketide synthase (PKS) acuA via condensation of acetate and malonate units. The 6-methylsalicylic acid decarboxylase acuB then catalyzes the decarboxylation of 6-methylsalicylic acid to yield m-cresol (also known as 3-methylphenol). These first reactions occur in the cytosol. The intermediate m-cresol is then transported into the endoplasmic reticulum where the cytochrome P450 monooxygenase acuC converts it to m-hydroxybenzyl alcohol, which is further converted to gentisyl alcohol by the cytochrome P450 monooxygenase acuD. Gentisyl alcohol is further oxidized by the oxidoreductase acuE that probably catalyzes hydroxylation of the aromatic ring. The aromatic system might then be opened by oxidation through a Baeyer-Villiger type of oxidation, which could be catalyzed by acuF, with the carboxylic acid at C-1 subsequently reduced to an aldehyde by acuG. Subsequently, a hemiacetal is formed, before the dehydrogenase acuH would reduce the double bond between C-4 and C-6. Finally, keto-enol tautomerism results in formation of aculinic acid, which exists as two diastereomers (both R/S configurations at C-1) by non-enzymatic hemiacetal formation. The carboxypeptidase acuI could be involved in the linking of aculinic acid to an aculene A moiety produced by the aculene biosynthesis cluster and which leads to the production of aculin A. AcuI may also be involved in the attachment of proline to aculinic acid to form epi-aculins A and B. The chain is Cytochrome P450 monooxygenase acuD from Aspergillus aculeatus (strain ATCC 16872 / CBS 172.66 / WB 5094).